A 368-amino-acid polypeptide reads, in one-letter code: High affinity transport system protein p37 (368 aa).

Residues 1 to 25 (MLFKKFTWVIPSLFLTIISTSLLIS) form the signal peptide. Cys26 carries the N-palmitoyl cysteine lipid modification. Cys26 carries S-diacylglycerol cysteine lipidation.

Its subcellular location is the cell membrane. P37 is part of a high-affinity transport system. This chain is High affinity transport system protein p37 (p37), found in Mycoplasma genitalium (strain ATCC 33530 / DSM 19775 / NCTC 10195 / G37) (Mycoplasmoides genitalium).